The sequence spans 505 residues: ATP synthase subunit alpha (505 aa).

170–177 serves as a coordination point for ATP; that stretch reads GDRQTGKT.

Belongs to the ATPase alpha/beta chains family. F-type ATPases have 2 components, CF(1) - the catalytic core - and CF(0) - the membrane proton channel. CF(1) has five subunits: alpha(3), beta(3), gamma(1), delta(1), epsilon(1). CF(0) has four main subunits: a(1), b(1), b'(1) and c(9-12).

Its subcellular location is the cellular thylakoid membrane. It catalyses the reaction ATP + H2O + 4 H(+)(in) = ADP + phosphate + 5 H(+)(out). In terms of biological role, produces ATP from ADP in the presence of a proton gradient across the membrane. The alpha chain is a regulatory subunit. This chain is ATP synthase subunit alpha, found in Prochlorococcus marinus (strain MIT 9515).